The sequence spans 367 residues: 3-dehydroquinate synthase (367 aa).

NAD(+) is bound by residues 69–74, 103–107, 127–128, Lys-140, and Lys-149; these read DGEAFK, GVIGD, and TT. Zn(2+)-binding residues include Glu-182, His-245, and His-262.

Belongs to the sugar phosphate cyclases superfamily. Dehydroquinate synthase family. The cofactor is Co(2+). Requires Zn(2+) as cofactor. NAD(+) is required as a cofactor.

The protein localises to the cytoplasm. The enzyme catalyses 7-phospho-2-dehydro-3-deoxy-D-arabino-heptonate = 3-dehydroquinate + phosphate. The protein operates within metabolic intermediate biosynthesis; chorismate biosynthesis; chorismate from D-erythrose 4-phosphate and phosphoenolpyruvate: step 2/7. Its function is as follows. Catalyzes the conversion of 3-deoxy-D-arabino-heptulosonate 7-phosphate (DAHP) to dehydroquinate (DHQ). This is 3-dehydroquinate synthase from Pseudomonas syringae pv. syringae (strain B728a).